The following is a 111-amino-acid chain: Large ribosomal subunit protein uL22 (111 aa).

Belongs to the universal ribosomal protein uL22 family. Part of the 50S ribosomal subunit.

Functionally, this protein binds specifically to 23S rRNA; its binding is stimulated by other ribosomal proteins, e.g. L4, L17, and L20. It is important during the early stages of 50S assembly. It makes multiple contacts with different domains of the 23S rRNA in the assembled 50S subunit and ribosome. The globular domain of the protein is located near the polypeptide exit tunnel on the outside of the subunit, while an extended beta-hairpin is found that lines the wall of the exit tunnel in the center of the 70S ribosome. The polypeptide is Large ribosomal subunit protein uL22 (Chlamydia pneumoniae (Chlamydophila pneumoniae)).